The following is a 237-amino-acid chain: Uracil-DNA glycosylase (237 aa).

Catalysis depends on aspartate 77, which acts as the Proton acceptor.

This sequence belongs to the uracil-DNA glycosylase (UDG) superfamily. UNG family.

It localises to the cytoplasm. It carries out the reaction Hydrolyzes single-stranded DNA or mismatched double-stranded DNA and polynucleotides, releasing free uracil.. Its function is as follows. Excises uracil residues from the DNA which can arise as a result of misincorporation of dUMP residues by DNA polymerase or due to deamination of cytosine. The chain is Uracil-DNA glycosylase from Acinetobacter baumannii (strain ACICU).